We begin with the raw amino-acid sequence, 186 residues long: Inner membrane-spanning protein YciB (186 aa).

Helical transmembrane passes span 10–30 (IILF…AVAI), 47–67 (VEPL…ATLL), 76–96 (WKPT…QLVF), 121–141 (WGWT…AYNF), and 149–169 (FKLF…ALYL).

The protein belongs to the YciB family.

It is found in the cell inner membrane. Functionally, plays a role in cell envelope biogenesis, maintenance of cell envelope integrity and membrane homeostasis. The protein is Inner membrane-spanning protein YciB of Acidovorax sp. (strain JS42).